The sequence spans 218 residues: Envelope glycoprotein L (218 aa).

The interaction with gH stretch occupies residues 57-185 (KLVKATRLDF…LGPPPLGCFT (129 aa)). Positions 60-218 (KATRLDFTWG…ASYYANLQKT (159 aa)) constitute a gL alphaherpesvirus-type domain. Disulfide bonds link Cys81/Cys113 and Cys183/Cys206.

It belongs to the herpesviridae glycoprotein L (gL) family. Alphaherpesvirinae gL subfamily. In terms of assembly, interacts with glycoprotein H (gH); this interaction is necessary for the correct processing and cell surface expression of gH. The heterodimer gH/gL seems to interact with gB trimers during fusion.

The protein localises to the virion membrane. It localises to the host cell membrane. It is found in the host Golgi apparatus. The protein resides in the host trans-Golgi network. Functionally, the heterodimer glycoprotein H-glycoprotein L is required for the fusion of viral and plasma membranes leading to virus entry into the host cell. Acts as a functional inhibitor of gH and maintains gH in an inhibited form. Upon binding to host integrins, gL dissociates from gH leading to activation of the viral fusion glycoproteins gB and gH. The polypeptide is Envelope glycoprotein L (Equus caballus (Horse)).